The sequence spans 450 residues: tRNA-2-methylthio-N(6)-dimethylallyladenosine synthase (450 aa).

The MTTase N-terminal domain maps to 14 to 132 (GEFFIETWGC…FPNYLNEVKK (119 aa)). Residues Cys23, Cys59, Cys93, Cys169, Cys173, and Cys176 each contribute to the [4Fe-4S] cluster site. The region spanning 155 to 385 (RKNSMKAFVT…VEVVNEISAK (231 aa)) is the Radical SAM core domain. In terms of domain architecture, TRAM spans 388–450 (KAYEGKIEEV…NSFSLTGEEI (63 aa)).

The protein belongs to the methylthiotransferase family. MiaB subfamily. In terms of assembly, monomer. [4Fe-4S] cluster is required as a cofactor.

It is found in the cytoplasm. It catalyses the reaction N(6)-dimethylallyladenosine(37) in tRNA + (sulfur carrier)-SH + AH2 + 2 S-adenosyl-L-methionine = 2-methylsulfanyl-N(6)-dimethylallyladenosine(37) in tRNA + (sulfur carrier)-H + 5'-deoxyadenosine + L-methionine + A + S-adenosyl-L-homocysteine + 2 H(+). In terms of biological role, catalyzes the methylthiolation of N6-(dimethylallyl)adenosine (i(6)A), leading to the formation of 2-methylthio-N6-(dimethylallyl)adenosine (ms(2)i(6)A) at position 37 in tRNAs that read codons beginning with uridine. This is tRNA-2-methylthio-N(6)-dimethylallyladenosine synthase from Clostridium botulinum (strain Okra / Type B1).